The chain runs to 145 residues: D-aminoacyl-tRNA deacylase (145 aa).

Positions 137 to 138 (GP) match the Gly-cisPro motif, important for rejection of L-amino acids motif.

This sequence belongs to the DTD family. In terms of assembly, homodimer.

It localises to the cytoplasm. The catalysed reaction is glycyl-tRNA(Ala) + H2O = tRNA(Ala) + glycine + H(+). It carries out the reaction a D-aminoacyl-tRNA + H2O = a tRNA + a D-alpha-amino acid + H(+). In terms of biological role, an aminoacyl-tRNA editing enzyme that deacylates mischarged D-aminoacyl-tRNAs. Also deacylates mischarged glycyl-tRNA(Ala), protecting cells against glycine mischarging by AlaRS. Acts via tRNA-based rather than protein-based catalysis; rejects L-amino acids rather than detecting D-amino acids in the active site. By recycling D-aminoacyl-tRNA to D-amino acids and free tRNA molecules, this enzyme counteracts the toxicity associated with the formation of D-aminoacyl-tRNA entities in vivo and helps enforce protein L-homochirality. This chain is D-aminoacyl-tRNA deacylase, found in Shewanella sediminis (strain HAW-EB3).